We begin with the raw amino-acid sequence, 210 residues long: Phosphoenolpyruvate guanylyltransferase (210 aa).

Phosphoenolpyruvate contacts are provided by Thr-130, Gly-146, and Ser-149.

This sequence belongs to the CofC family.

The catalysed reaction is phosphoenolpyruvate + GTP + H(+) = enolpyruvoyl-2-diphospho-5'-guanosine + diphosphate. It participates in cofactor biosynthesis; coenzyme F420 biosynthesis. In terms of biological role, guanylyltransferase that catalyzes the activation of phosphoenolpyruvate (PEP) as enolpyruvoyl-2-diphospho-5'-guanosine, via the condensation of PEP with GTP. It is involved in the biosynthesis of coenzyme F420, a hydride carrier cofactor. The polypeptide is Phosphoenolpyruvate guanylyltransferase (Roseiflexus castenholzii (strain DSM 13941 / HLO8)).